Reading from the N-terminus, the 471-residue chain is Putative multidrug resistance protein MdtD (471 aa).

The Periplasmic portion of the chain corresponds to 1–11 (MTDLPDSTRWQ). The chain crosses the membrane as a helical span at residues 12–32 (LWIVAFGFFMQSLDTTIVNTA). Over 33-48 (LPSMAQSLGESPLHMH) the chain is Cytoplasmic. The helical transmembrane segment at 49 to 69 (MVIVSYVLTVAVMLPASGWLA) threads the bilayer. Residues 70–76 (DKVGVRN) are Periplasmic-facing. The chain crosses the membrane as a helical span at residues 77 to 97 (IFFTAIVLFTLGSLFCALSGT). Over 98 to 101 (LNEL) the chain is Cytoplasmic. A helical transmembrane segment spans residues 102-124 (LLARALQGVGGAMMVPVGRLTVM). Topologically, residues 125–137 (KIVPREQYMAAMT) are periplasmic. A helical membrane pass occupies residues 138-158 (FVTLPGQVGPLLGPALGGLLV). The Cytoplasmic portion of the chain corresponds to 159–164 (EYASWH). Residues 165–185 (WIFLINIPVGIIGAIATLMLM) form a helical membrane-spanning segment. Over 186 to 196 (PNYTMQTRRFD) the chain is Periplasmic. A helical membrane pass occupies residues 197 to 217 (LSGFLLLAVGMAVLTLALDGS). The Cytoplasmic segment spans residues 218 to 224 (KGTGFSP). The chain crosses the membrane as a helical span at residues 225–245 (LAIAGLVAVGVVALVLYLLHA). The Periplasmic portion of the chain corresponds to 246-262 (QNNNRALFSLKLFRTRT). Residues 263-283 (FSLGLAGSFAGRIGSGMLPFM) traverse the membrane as a helical segment. Topologically, residues 284–285 (TP) are cytoplasmic. The helical transmembrane segment at 286–306 (VFLQIGLGFSPFHAGLMMIPM) threads the bilayer. Topologically, residues 307–341 (VLGSMGMKRIVVQVVNRFGYRRVLVATTLGLSLVT) are periplasmic. The helical transmembrane segment at 342-362 (LLFMTTALLGWYYVLPFVLFL) threads the bilayer. At 363–395 (QGMVNSTRFSSMNTLTLKDLPDNLASSGNSLLS) the chain is on the cytoplasmic side. The helical transmembrane segment at 396 to 416 (MIMQLSMSIGVTIAGLLLGLF) threads the bilayer. At 417-430 (GSQHVSVDSGTTQT) the chain is on the periplasmic side. The chain crosses the membrane as a helical span at residues 431-451 (VFMYTWLSMAFIIALPAFVFA). Residues 452-471 (RVPSDTHQNVAISRRKRSAQ) lie on the Cytoplasmic side of the membrane.

Belongs to the major facilitator superfamily. TCR/Tet family.

It is found in the cell inner membrane. This Escherichia coli O45:K1 (strain S88 / ExPEC) protein is Putative multidrug resistance protein MdtD.